The chain runs to 502 residues: Probable cytochrome P450 313b1 (502 aa).

Residue cysteine 449 coordinates heme.

This sequence belongs to the cytochrome P450 family. Requires heme as cofactor.

It localises to the endoplasmic reticulum membrane. The protein resides in the microsome membrane. In terms of biological role, may be involved in the metabolism of insect hormones and in the breakdown of synthetic insecticides. The chain is Probable cytochrome P450 313b1 (Cyp313b1) from Drosophila melanogaster (Fruit fly).